A 740-amino-acid polypeptide reads, in one-letter code: MWELVETVRSMLNSLHDGEISVSAYDTAWVARVPALDGSNKPQFPMCLNWIMNNQLEDGSWGDRDLFLTYDRICSALACAIALKTWNTGDKIVHKALEFIRKTMPKMELEDSTHMPIGFEIVFPAMIEEAMALELDIDYREPVLQTIYAERKKKLERIPMNVVQNYPTTLLHSLEGLHKTIDWDKVIKLQSPDGSLLFSPASTACALMHTGNEKCLQYLNNLVKRFNCAVPNVYPVDLFEHLWIVDRLQRLGISRYFTQEIKSALDYVYRYWTDKGIAWARGSPVQDADDTSMAFRLLRSHGYDISPDAFKTFQEGDSFVCFSGQAGQAVTGMYNLYRASQVMFPGETILEEAGSFARKFLEGKRQENQLYDKWIISKDLPGEVEFALDNPMHARLERLATRRYIDQYAADDVWIGKSLYRMPFVNNPIFLELAKADFNMCRALHRKEFQQLERWYDESSLSMFKGFSRSKLEQTFYSAAATIFEPELSPARLIWSQCWFISLGINEYFDHQGSTKELEDLINNVERWNVNSLGNCSAEVKILFVELYNIVQNHSKQGFLYQGRSIGGALREIWKTWLSSLLQRTKWKMSDNNPTLEEYLKASHSSIEPAVRSTMYFVGETLATTGDIKDSAICQMMNTASRLVQDTHTDKVDSSLNSITIYLEENPQLTKSEALSEVQALANKNMQKLLYETLQPGALPQACKQLFLNAARIMNVFPGTNKVQAKLSNHVKRVLSQPVL.

A substrate-binding site is contributed by K154. Residues D287 and D289 each contribute to the Mg(2+) site. Positions 287-290 match the DXDD motif motif; the sequence is DADD. K373 provides a ligand contact to substrate.

The protein belongs to the terpene synthase family. Requires Mg(2+) as cofactor.

It catalyses the reaction (2E,6E,10E)-geranylgeranyl diphosphate = (+)-copalyl diphosphate. It participates in secondary metabolite biosynthesis; terpenoid biosynthesis. Its function is as follows. Monofunctional diterpene synthase converting geranylgeranyl diphosphate to copalyl diphosphate. This Selaginella moellendorffii (Spikemoss) protein is Copalyl diphosphate synthase 2 (CPS2).